Reading from the N-terminus, the 202-residue chain is Large ribosomal subunit protein bL17 (202 aa).

Residues 130 to 142 (AAPAATAPAPVEE) are compositionally biased toward low complexity. Residues 130–202 (AAPAATAPAP…TEESTEDDKA (73 aa)) form a disordered region. Acidic residues-rich tracts occupy residues 143 to 168 (APAE…EASP) and 177 to 202 (QPVE…DDKA).

The protein belongs to the bacterial ribosomal protein bL17 family. As to quaternary structure, part of the 50S ribosomal subunit. Contacts protein L32.

In Nocardioides sp. (strain ATCC BAA-499 / JS614), this protein is Large ribosomal subunit protein bL17.